Reading from the N-terminus, the 123-residue chain is Large ribosomal subunit protein bL19 (123 aa).

Belongs to the bacterial ribosomal protein bL19 family.

Its function is as follows. This protein is located at the 30S-50S ribosomal subunit interface and may play a role in the structure and function of the aminoacyl-tRNA binding site. The protein is Large ribosomal subunit protein bL19 of Bdellovibrio bacteriovorus (strain ATCC 15356 / DSM 50701 / NCIMB 9529 / HD100).